The primary structure comprises 318 residues: Ubiquitin-like domain-containing CTD phosphatase 1 (318 aa).

Alanine 2 carries the post-translational modification N-acetylalanine. Residues 3–81 (LPIIVKWGGQ…IMMMGTREES (79 aa)) enclose the Ubiquitin-like domain. Lysine 117 is modified (N6-acetyllysine). The 162-residue stretch at 133–294 (PREGKKLLVL…LKLTQYLKEI (162 aa)) folds into the FCP1 homology domain. Mg(2+) is bound by residues aspartate 143, aspartate 145, and aspartate 253.

Mg(2+) is required as a cofactor.

It localises to the nucleus. It catalyses the reaction O-phospho-L-seryl-[protein] + H2O = L-seryl-[protein] + phosphate. The enzyme catalyses O-phospho-L-threonyl-[protein] + H2O = L-threonyl-[protein] + phosphate. Its function is as follows. Dephosphorylates 26S nuclear proteasomes, thereby decreasing their proteolytic activity. Recruited to the 19S regulatory particle of the 26S proteasome through its interaction with 19S component PSMD2/RPN1. Once recruited, dephosphorylates 19S component PSMC2/RPT1 which impairs PSMC2 ATPase activity and disrupts 26S proteasome assembly. Has also been reported to stimulate the proteolytic activity of the 26S proteasome. The chain is Ubiquitin-like domain-containing CTD phosphatase 1 (UBLCP1) from Pongo abelii (Sumatran orangutan).